Here is a 356-residue protein sequence, read N- to C-terminus: Tyrosine recombinase XerS (356 aa).

One can recognise a Core-binding (CB) domain in the interval 16–121 (LMPWYVLEYY…ALSSLYKYLT (106 aa)). Residues 169-354 (GFLTYIDQEH…VNDEQKNALD (186 aa)) enclose the Tyr recombinase domain. Active-site residues include arginine 210, lysine 234, histidine 306, arginine 309, and histidine 332. The active-site O-(3'-phospho-DNA)-tyrosine intermediate is tyrosine 341.

This sequence belongs to the 'phage' integrase family. XerS subfamily.

The protein localises to the cytoplasm. FtsK is required for recombination. Its function is as follows. Site-specific tyrosine recombinase, which acts by catalyzing the cutting and rejoining of the recombining DNA molecules. Essential to convert dimers of the bacterial chromosome into monomers to permit their segregation at cell division. In Streptococcus pneumoniae serotype 2 (strain D39 / NCTC 7466), this protein is Tyrosine recombinase XerS.